The chain runs to 113 residues: Con-Ins G3 (113 aa).

Residues 1-21 form the signal peptide; that stretch reads MTTSFYFLLVALGLLLYVCQS. Positions 22-29 are excised as a propeptide; sequence SFGNQHTR. Pro34 is modified (4-hydroxyproline; partial). Disulfide bonds link Cys38-Cys99, Cys50-Cys112, and Cys98-Cys103. The residue at position 41 (Glu41) is a 4-carboxyglutamate. His51 is subject to Histidine amide. Residues 52–92 constitute a propeptide, c peptide; that stretch reads GKRNDAGKKRGRASPLWQRQGFLSMLKAKRNEAFFLQRDGR. Glu96 carries the post-translational modification 4-carboxyglutamate. Pro102 bears the 4-hydroxyproline; partial mark.

Belongs to the insulin family. In terms of assembly, heterodimer of A and B chains; disulfide-linked. In terms of processing, it is noteworthy that in this dimer, in contrast to Con-Ins G1, the chain B is amidated and not the chain A. In terms of tissue distribution, expressed by the venom gland.

It is found in the secreted. Functionally, this venom insulin, from a fish-hunting cone snail, facilitates prey capture by rapidly inducing hypoglycemic shock. It is one of the smallest known insulin found in nature and lacks the C-terminal segment of the B chain that, in human insulin, mediates engagement of the insulin receptor (INSR) and assembly of the hormone's hexameric storage form. Despite lacking this segment, it both binds and activates human insulin receptor (long isoform (HIR-B)) with a high potency (EC(50)=242 nM). In vivo, intraperitoneal injection of this peptide into zebrafish lowers blood glucose with a lower potency than human insulin. In addition, when applied to water, this peptide reduces overall locomotor activity of zebrafish larvae, observed as a significant decrease in the percentage of time spent swimming and movement frequency. When tested on a mouse model of diabetes, this insulin also lowers blood glucose with a 10-fold lower potency than human insulin. In Conus geographus (Geography cone), this protein is Con-Ins G3.